Here is a 178-residue protein sequence, read N- to C-terminus: CDP-archaeol synthase (178 aa).

The next 5 helical transmembrane spans lie at 3-23, 55-75, 91-111, 125-145, and 149-169; these read IIYLVINSFIFILPAYVANAT, TFFGLFCGTITAILEGIIFNL, GIVGLLLSAGALFGDAIGSFI, ILDQLGFIVFALLFVYPFAPV, and MGIFLLVITPMIHLSANIIAY.

It belongs to the CDP-archaeol synthase family. Mg(2+) serves as cofactor.

The protein localises to the cell membrane. It catalyses the reaction 2,3-bis-O-(geranylgeranyl)-sn-glycerol 1-phosphate + CTP + H(+) = CDP-2,3-bis-O-(geranylgeranyl)-sn-glycerol + diphosphate. It participates in membrane lipid metabolism; glycerophospholipid metabolism. Catalyzes the formation of CDP-2,3-bis-(O-geranylgeranyl)-sn-glycerol (CDP-archaeol) from 2,3-bis-(O-geranylgeranyl)-sn-glycerol 1-phosphate (DGGGP) and CTP. This reaction is the third ether-bond-formation step in the biosynthesis of archaeal membrane lipids. The sequence is that of CDP-archaeol synthase from Methanococcus aeolicus (strain ATCC BAA-1280 / DSM 17508 / OCM 812 / Nankai-3).